Here is a 217-residue protein sequence, read N- to C-terminus: 3,4-dihydroxy-2-butanone 4-phosphate synthase (217 aa).

Residues 37–38 (RE), Asp42, 150–154 (RGGHT), and Glu174 contribute to the D-ribulose 5-phosphate site. A Mg(2+)-binding site is contributed by Glu38. Residue His153 coordinates Mg(2+).

The protein belongs to the DHBP synthase family. In terms of assembly, homodimer. The cofactor is Mg(2+). It depends on Mn(2+) as a cofactor.

It catalyses the reaction D-ribulose 5-phosphate = (2S)-2-hydroxy-3-oxobutyl phosphate + formate + H(+). It functions in the pathway cofactor biosynthesis; riboflavin biosynthesis; 2-hydroxy-3-oxobutyl phosphate from D-ribulose 5-phosphate: step 1/1. Functionally, catalyzes the conversion of D-ribulose 5-phosphate to formate and 3,4-dihydroxy-2-butanone 4-phosphate. The sequence is that of 3,4-dihydroxy-2-butanone 4-phosphate synthase from Salmonella arizonae (strain ATCC BAA-731 / CDC346-86 / RSK2980).